The following is a 369-amino-acid chain: Lipoyl synthase, mitochondrial (369 aa).

The N-terminal 32 residues, 1 to 32 (MLTKGVRALAWSPRRYITLDAEAAKPVVAKRR), are a transit peptide targeting the mitochondrion. Residues cysteine 106, cysteine 111, cysteine 117, cysteine 136, cysteine 140, cysteine 143, and serine 351 each contribute to the [4Fe-4S] cluster site. Residues 121 to 340 (NKGSATATIM…KEKALELGFL (220 aa)) form the Radical SAM core domain.

Belongs to the radical SAM superfamily. Lipoyl synthase family. [4Fe-4S] cluster serves as cofactor.

It localises to the mitochondrion. It catalyses the reaction [[Fe-S] cluster scaffold protein carrying a second [4Fe-4S](2+) cluster] + N(6)-octanoyl-L-lysyl-[protein] + 2 oxidized [2Fe-2S]-[ferredoxin] + 2 S-adenosyl-L-methionine + 4 H(+) = [[Fe-S] cluster scaffold protein] + N(6)-[(R)-dihydrolipoyl]-L-lysyl-[protein] + 4 Fe(3+) + 2 hydrogen sulfide + 2 5'-deoxyadenosine + 2 L-methionine + 2 reduced [2Fe-2S]-[ferredoxin]. Its pathway is protein modification; protein lipoylation via endogenous pathway; protein N(6)-(lipoyl)lysine from octanoyl-[acyl-carrier-protein]: step 2/2. Its function is as follows. Catalyzes the radical-mediated insertion of two sulfur atoms into the C-6 and C-8 positions of the octanoyl moiety bound to the lipoyl domains of lipoate-dependent enzymes, thereby converting the octanoylated domains into lipoylated derivatives. The sequence is that of Lipoyl synthase, mitochondrial from Eremothecium gossypii (strain ATCC 10895 / CBS 109.51 / FGSC 9923 / NRRL Y-1056) (Yeast).